The following is a 394-amino-acid chain: 1-deoxy-D-xylulose 5-phosphate reductoisomerase (394 aa).

The NADPH site is built by Thr-12, Gly-13, Ser-14, Ile-15, Lys-39, Gln-40, and Asn-126. Lys-127 provides a ligand contact to 1-deoxy-D-xylulose 5-phosphate. Glu-128 contacts NADPH. A Mn(2+)-binding site is contributed by Asp-152. 1-deoxy-D-xylulose 5-phosphate-binding residues include Ser-153, Glu-154, Ser-183, and His-206. Residue Glu-154 participates in Mn(2+) binding. Gly-212 serves as a coordination point for NADPH. 1-deoxy-D-xylulose 5-phosphate is bound by residues Ser-219, Asn-224, Lys-225, and Glu-228. Glu-228 is a binding site for Mn(2+).

This sequence belongs to the DXR family. It depends on Mg(2+) as a cofactor. Mn(2+) is required as a cofactor.

It catalyses the reaction 2-C-methyl-D-erythritol 4-phosphate + NADP(+) = 1-deoxy-D-xylulose 5-phosphate + NADPH + H(+). The protein operates within isoprenoid biosynthesis; isopentenyl diphosphate biosynthesis via DXP pathway; isopentenyl diphosphate from 1-deoxy-D-xylulose 5-phosphate: step 1/6. Its function is as follows. Catalyzes the NADPH-dependent rearrangement and reduction of 1-deoxy-D-xylulose-5-phosphate (DXP) to 2-C-methyl-D-erythritol 4-phosphate (MEP). The chain is 1-deoxy-D-xylulose 5-phosphate reductoisomerase from Neisseria meningitidis serogroup B (strain ATCC BAA-335 / MC58).